Reading from the N-terminus, the 627-residue chain is Ras and EF-hand domain-containing protein homolog (627 aa).

The stretch at 55–245 forms a coiled coil; sequence YERVIRNFLR…RKLHDSNDGL (191 aa). 2 positions are modified to phosphoserine: S266 and S272. GTP-binding positions include 438–443, 541–544, and 578–579; these read AVGKSS, NKAD, and AK.

The protein belongs to the small GTPase superfamily. Rab family. In terms of assembly, homodimer. Interacts with the dynein-dynactin complex.

Its subcellular location is the cytoplasm. The protein resides in the perinuclear region. In terms of biological role, binds predominantly GDP, and also GTP. Acts as a dynein adapter protein that activates dynein-mediated transport and dynein-dynactin motility on microtubules. The protein is Ras and EF-hand domain-containing protein homolog (Rasef) of Mus musculus (Mouse).